Here is a 579-residue protein sequence, read N- to C-terminus: Zinc finger-containing ubiquitin peptidase 1 (579 aa).

The C2H2-type 1 zinc-finger motif lies at 2–25 (LSCDICGETVSSEPDMKAHLLIVH). The C2H2-type 2; atypical zinc-finger motif lies at 30–53 (VICPFCKLSGVNYDEMCFHIETAH). C2H2-type zinc fingers lie at residues 155–178 (PECP…KTKH) and 194–216 (YDCP…VDLH). The MIU stretch occupies residues 227–249 (NRVQCSRDLELAQQLQQEEDRKR). The segment at 250-275 (RSEESRQEMEEFQKLQRQYGLDNSGG) is zUBD/ZHA. An N6-acetyllysine modification is found at Lys263. Residue Cys361 is the Nucleophile of the active site. The active-site Proton acceptor is the His492. Asp513 is a catalytic residue.

The protein belongs to the peptidase C78 family. ZUFSP subfamily. As to quaternary structure, interacts with RPA1 and RPA2.

Its subcellular location is the cytoplasm. The protein resides in the nucleus. The catalysed reaction is Thiol-dependent hydrolysis of ester, thioester, amide, peptide and isopeptide bonds formed by the C-terminal Gly of ubiquitin (a 76-residue protein attached to proteins as an intracellular targeting signal).. Deubiquitinase with endodeubiquitinase activity that specifically interacts with and cleaves 'Lys-63'-linked long polyubiquitin chains. Shows only weak activity against 'Lys-11' and 'Lys-48'-linked chains. Plays an important role in genome stability pathways, functioning to prevent spontaneous DNA damage and also promote cellular survival in response to exogenous DNA damage. Modulates the ubiquitination status of replication protein A (RPA) complex proteins in response to replication stress. The protein is Zinc finger-containing ubiquitin peptidase 1 of Bos taurus (Bovine).